Reading from the N-terminus, the 313-residue chain is Probable cell division protein WhiA (313 aa).

A DNA-binding region (H-T-H motif) is located at residues 280 to 313 (SLKELGAMLNPPIGKSGVNHRLKKLCSIADGLRQ).

The protein belongs to the WhiA family.

In terms of biological role, involved in cell division and chromosome segregation. The sequence is that of Probable cell division protein WhiA from Lachnoclostridium phytofermentans (strain ATCC 700394 / DSM 18823 / ISDg) (Clostridium phytofermentans).